A 176-amino-acid chain; its full sequence is HTH-type transcriptional regulator DctR (176 aa).

An HTH luxR-type domain is found at 109–174 (VPEADVSLSR…ELVRHQHINY (66 aa)). Positions 133–152 (TEDILEKLKISLKTFYCHKH) form a DNA-binding region, H-T-H motif.

May act as a transcriptional regulator of dctA. This is HTH-type transcriptional regulator DctR (dctR) from Escherichia coli O6:H1 (strain CFT073 / ATCC 700928 / UPEC).